We begin with the raw amino-acid sequence, 201 residues long: Putative Ras-related protein Rab-1C (201 aa).

Residues 15-23 (GDSGVGKSC), 33-40 (YTESYIST), and 63-67 (DTAGQ) contribute to the GTP site. Positions 37-45 (YISTIGVDF) match the Effector region motif. The residue at position 76 (Ser76) is a (Microbial infection) O-(2-cholinephosphoryl)serine. Residues 121–124 (NKSD) and 151–153 (SAK) contribute to the GTP site. Positions 174–201 (GPGAASGGERPNLKIDSTPVKPAGGGCC) are disordered. S-geranylgeranyl cysteine attachment occurs at residues Cys200 and Cys201.

It belongs to the small GTPase superfamily. Rab family. In terms of processing, (Microbial infection) Phosphocholinated at Ser-76 by L.pneumophila AnkX, leading to displace GDP dissociation inhibitors (GDI). Both GDP-bound and GTP-bound forms can be phosphocholinated. Dephosphocholinated by L.pneumophila Lem3, restoring accessibility to L.pneumophila GTPase effector LepB. (Microbial infection) Glycosylated by S.typhimurium protein Ssek3: arginine GlcNAcylation prevents GTPase activity, thereby disrupting vesicular protein transport from the endoplasmic reticulum (ER) to the Golgi compartment.

It localises to the membrane. It is found in the cytoplasm. The catalysed reaction is GTP + H2O = GDP + phosphate + H(+). Functionally, protein transport. Probably involved in vesicular traffic. The polypeptide is Putative Ras-related protein Rab-1C (RAB1C) (Homo sapiens (Human)).